A 331-amino-acid chain; its full sequence is MEDYDLVIIGAGPTGLFATFLAGLRDIKSITLEALDYVGGQIPELYPEKPVYDVQGIPKINAIKLRDQMYEQAKTFNNRIELNSKVTDIIKENDIFKIEVNGVYKYNARAVLLCTGIGDFTPRKIGCEGEDRFFNKGLTYTVKDTEKFRDLTVAVVGGGDSALDYATELANTARHVYIIHHSENFKAAEKTIDLARKNEKITFIVNSSVISIDGGSKLESIKIKNELTNDISELGLDALVVAIGHVGRANIYKSLPLQLSPNKRGVLVNSKLETNIPGIYAAGDVASVEGEPANPLIAIGGAQAYQAINYIKKYINPQASFFGGHSSNLKI.

FAD-binding residues include T14, E33, Q41, Y46, V86, F120, D284, and S327.

Belongs to the ferredoxin--NADP reductase type 2 family. In terms of assembly, homodimer. FAD serves as cofactor.

The catalysed reaction is 2 reduced [2Fe-2S]-[ferredoxin] + NADP(+) + H(+) = 2 oxidized [2Fe-2S]-[ferredoxin] + NADPH. In Picrophilus torridus (strain ATCC 700027 / DSM 9790 / JCM 10055 / NBRC 100828 / KAW 2/3), this protein is Ferredoxin--NADP reductase.